The chain runs to 482 residues: Glutamyl-tRNA(Gln) amidotransferase subunit A (482 aa).

Active-site charge relay system residues include Lys80 and Ser159. The active-site Acyl-ester intermediate is the Ser183.

The protein belongs to the amidase family. GatA subfamily. Heterotrimer of A, B and C subunits.

It carries out the reaction L-glutamyl-tRNA(Gln) + L-glutamine + ATP + H2O = L-glutaminyl-tRNA(Gln) + L-glutamate + ADP + phosphate + H(+). Allows the formation of correctly charged Gln-tRNA(Gln) through the transamidation of misacylated Glu-tRNA(Gln) in organisms which lack glutaminyl-tRNA synthetase. The reaction takes place in the presence of glutamine and ATP through an activated gamma-phospho-Glu-tRNA(Gln). The polypeptide is Glutamyl-tRNA(Gln) amidotransferase subunit A (Neorickettsia sennetsu (strain ATCC VR-367 / Miyayama) (Ehrlichia sennetsu)).